A 211-amino-acid polypeptide reads, in one-letter code: MQSAMFLAVQHDCRPMDKSAGSGHKSEEKREKMKRTLLKDWKTRLSYFLQNSSTPGKPKTGKKSKQQAFIKPSPEEAQLWSEAFDELLASKYGLAAFRAFLKSEFCEENIEFWLACEDFKKTKSPQKLSSKARKIYTDFIEKEAPKEINIDFQTKTLIAQNIQEATSGCFTTAQKRVYSLMENNSYPRFLESEFYQDLCKKPQITTEPHAT.

Disordered regions lie at residues 14–33 (RPMDKSAGSGHKSEEKREKM) and 49–68 (LQNSSTPGKPKTGKKSKQQA). A necessary for membrane association region spans residues 32-66 (KMKRTLLKDWKTRLSYFLQNSSTPGKPKTGKKSKQ). Residues 79–116 (LWSEAFDELLASKYGLAAFRAFLKSEFCEENIEFWLAC) form a necessary to inhibit protein synthesis region. The 117-residue stretch at 83–199 (AFDELLASKY…LESEFYQDLC (117 aa)) folds into the RGS domain.

As to quaternary structure, interacts with GNAQ. Does not interact with GNAI1 and GNAI3. Interacts with EIF2B5. Interacts with PRKG1 (isoform alpha). Phosphorylated by protein kinase C. Phosphorylation by PRKG1 leads to activation of RGS2 activity. In terms of tissue distribution, expressed in acute myelogenous leukemia (AML) and in acute lymphoblastic leukemia (ALL).

It localises to the cell membrane. It is found in the cytoplasm. Its subcellular location is the nucleus. The protein resides in the nucleolus. The protein localises to the mitochondrion. In terms of biological role, regulates G protein-coupled receptor signaling cascades. Inhibits signal transduction by increasing the GTPase activity of G protein alpha subunits, thereby driving them into their inactive GDP-bound form. It is involved in the negative regulation of the angiotensin-activated signaling pathway. Plays a role in the regulation of blood pressure in response to signaling via G protein-coupled receptors and GNAQ. Plays a role in regulating the constriction and relaxation of vascular smooth muscle. Binds EIF2B5 and blocks its activity, thereby inhibiting the translation of mRNA into protein. The protein is Regulator of G-protein signaling 2 (RGS2) of Homo sapiens (Human).